The primary structure comprises 228 residues: Cytochrome c oxidase subunit 2 (228 aa).

Residues Met-1–His-26 lie on the Mitochondrial intermembrane side of the membrane. A helical transmembrane segment spans residues Ala-27 to Asn-48. The Mitochondrial matrix portion of the chain corresponds to Asn-49 to Glu-62. The chain crosses the membrane as a helical span at residues Met-63–Arg-82. The Mitochondrial intermembrane segment spans residues Leu-83–Ser-228. Cu cation is bound by residues His-161, Cys-196, Glu-198, Cys-200, His-204, and Met-207. Glu-198 serves as a coordination point for Mg(2+).

It belongs to the cytochrome c oxidase subunit 2 family. In terms of assembly, component of the cytochrome c oxidase (complex IV, CIV), a multisubunit enzyme composed of a catalytic core of 3 subunits and several supernumerary subunits. The complex exists as a monomer or a dimer and forms supercomplexes (SCs) in the inner mitochondrial membrane with ubiquinol-cytochrome c oxidoreductase (cytochrome b-c1 complex, complex III, CIII). It depends on Cu cation as a cofactor.

The protein resides in the mitochondrion inner membrane. It catalyses the reaction 4 Fe(II)-[cytochrome c] + O2 + 8 H(+)(in) = 4 Fe(III)-[cytochrome c] + 2 H2O + 4 H(+)(out). Functionally, component of the cytochrome c oxidase, the last enzyme in the mitochondrial electron transport chain which drives oxidative phosphorylation. The respiratory chain contains 3 multisubunit complexes succinate dehydrogenase (complex II, CII), ubiquinol-cytochrome c oxidoreductase (cytochrome b-c1 complex, complex III, CIII) and cytochrome c oxidase (complex IV, CIV), that cooperate to transfer electrons derived from NADH and succinate to molecular oxygen, creating an electrochemical gradient over the inner membrane that drives transmembrane transport and the ATP synthase. Cytochrome c oxidase is the component of the respiratory chain that catalyzes the reduction of oxygen to water. Electrons originating from reduced cytochrome c in the intermembrane space (IMS) are transferred via the dinuclear copper A center (CU(A)) of subunit 2 and heme A of subunit 1 to the active site in subunit 1, a binuclear center (BNC) formed by heme A3 and copper B (CU(B)). The BNC reduces molecular oxygen to 2 water molecules using 4 electrons from cytochrome c in the IMS and 4 protons from the mitochondrial matrix. This is Cytochrome c oxidase subunit 2 (mt:CoII) from Drosophila yakuba (Fruit fly).